The chain runs to 303 residues: mRNA-capping enzyme subunit beta (303 aa).

It belongs to the fungal TPase family. Heterodimer. The mRNA-capping enzyme is composed of two separate chains alpha and beta, respectively a mRNA guanylyltransferase and an mRNA 5'-triphosphate monophosphatase. It depends on Mg(2+) as a cofactor.

Its subcellular location is the nucleus. It catalyses the reaction a 5'-end triphospho-ribonucleoside in mRNA + H2O = a 5'-end diphospho-ribonucleoside in mRNA + phosphate + H(+). In terms of biological role, first step of mRNA capping. Converts the 5'-triphosphate end of a nascent mRNA chain into a diphosphate end. The polypeptide is mRNA-capping enzyme subunit beta (pct1) (Schizosaccharomyces pombe (strain 972 / ATCC 24843) (Fission yeast)).